A 484-amino-acid polypeptide reads, in one-letter code: Serine/threonine-protein kinase RIO1 (484 aa).

Residues 76 to 402 (ADLNGCLSTG…EFDNADHECS (327 aa)) form the Protein kinase domain. Lys125 and Leu198 together coordinate ATP. Asp244 functions as the Proton acceptor in the catalytic mechanism. Positions 249 and 261 each coordinate Mg(2+). The 4-aspartylphosphate intermediate role is filled by Asp261. The disordered stretch occupies residues 398–484 (DHECSSGTEE…KLVKKTKSKK (87 aa)). Ser402, Ser403, Ser409, Ser416, Ser417, and Ser419 each carry phosphoserine; by CK2. Positions 403-484 (SGTEEFSDDE…KLVKKTKSKK (82 aa)) are interaction with CKA2. Residues 407–434 (EFSDDEEDGSSGSEEDDEEEGEYYDDDE) are compositionally biased toward acidic residues. The tract at residues 440 to 484 (GKKHEDKDLKKLRKQEAKDAKREKRKTKVKKHIKKKLVKKTKSKK) is association with (pre-)40S ribosomal subunit. Basic and acidic residues predominate over residues 442 to 461 (KHEDKDLKKLRKQEAKDAKR). Basic residues predominate over residues 462-484 (EKRKTKVKKHIKKKLVKKTKSKK).

Belongs to the protein kinase superfamily. RIO-type Ser/Thr kinase family. In terms of assembly, interacts with CKA2. It depends on Mg(2+) as a cofactor. Autophosphorylated. Phosphorylated by casein kinase II (CK2). Phosphorylation by CK2 stimulates RIO1 kinase activity and targets it for degradation at the G1/S transition of the cell cycle.

The protein localises to the cytoplasm. The catalysed reaction is L-seryl-[protein] + ATP = O-phospho-L-seryl-[protein] + ADP + H(+). The enzyme catalyses L-threonyl-[protein] + ATP = O-phospho-L-threonyl-[protein] + ADP + H(+). It catalyses the reaction ATP + H2O = ADP + phosphate + H(+). Required for the final endonucleolytic cleavage at site D converting 20S pre-rRNA into the mature 18S rRNA. Required for the final steps of cytoplasmic maturation of the 40S ribosomal subunit. The association with the very late 40S subunit intermediate seems to follow RIO2 association with precursors of the 40S subunit and may involve a translation-like checkpoint point cycle preceeding the binding to the 60S ribosomal subunit. Despite the protein kinase domain is proposed to act predominantly as an ATPase. The catalytic activity regulates its dynamic association with the 40S subunit. Has a role in the cell cycle where it is required for entrance into S-phase and in the control of the onset of anaphase. Appears to also be involved in the maintenance of chromosome stability and correct mitotic segregation. This Saccharomyces cerevisiae (strain ATCC 204508 / S288c) (Baker's yeast) protein is Serine/threonine-protein kinase RIO1 (RIO1).